A 440-amino-acid polypeptide reads, in one-letter code: Probable aldose 1-epimerase ARB_05372 (440 aa).

Residues 1 to 24 (MCGVLRQLMLLLLAFLSITPSCSA) form the signal peptide. N-linked (GlcNAc...) asparagine glycans are attached at residues Asn-32, Asn-38, Asn-43, Asn-68, and Asn-112. 125–126 (NR) provides a ligand contact to substrate. Residues Asn-129, Asn-147, Asn-163, Asn-171, and Asn-199 are each glycosylated (N-linked (GlcNAc...) asparagine). The active-site Proton donor is His-233. N-linked (GlcNAc...) asparagine glycosylation is found at Asn-243, Asn-275, Asn-281, and Asn-306. Residue Asp-311 participates in substrate binding. Asn-321, Asn-337, Asn-365, and Asn-385 each carry an N-linked (GlcNAc...) asparagine glycan. The active-site Proton acceptor is Glu-401.

Belongs to the aldose epimerase family. Monomer.

Its subcellular location is the secreted. The catalysed reaction is alpha-D-glucose = beta-D-glucose. Its pathway is carbohydrate metabolism; hexose metabolism. Its function is as follows. Mutarotase converts alpha-aldose to the beta-anomer. It is active on D-glucose, L-arabinose, D-xylose, D-galactose, maltose and lactose. This Arthroderma benhamiae (strain ATCC MYA-4681 / CBS 112371) (Trichophyton mentagrophytes) protein is Probable aldose 1-epimerase ARB_05372.